The chain runs to 470 residues: MPHRKKKPFIEKKKAVSFHLVHRSQRDPLAADETAPQRVLVPTQKVNDEERRAEQRKYGVFFDDDYDYLQHLREPSGPAELIPSSTPSTYSSRGEEDTSVFPSTGIKLPSSVFASEFEEDVGLLNKAAPVSGPRLDFDPDIVAALDDDFDFDDPENLLEDDFILQASKPTGGEGMDMLESDGDDGNEWEDMDEGGSDGCGSTGPLSDGGDISAPGSPREAMKKHLFWEEETKSRFTEYSMTSSVMRRNEQLTLHDERFEKFYEQYDDVEIGALDNAELEGTIQVDSSRLQEVLNDYYKEKAENCVKLNTLEPFEDQDLAANELDESEKEETVTVVLEEAREKWDCESICSTYSNLYNHPQLIKYEPKPKQIHLSSKTGIPLHVLPKKGLTAKQVERMQMINSSDLPKVSTQPRLKTESKEDKKARKQAIKEERKERRVEKKANKLAFKLEKRRQEKELLNLKKNVEGLKL.

Phosphoserine is present on residues Ser-17 and Ser-24. Disordered regions lie at residues 23–54, 75–103, and 166–209; these read RSQR…RRAE, PSGP…VFPS, and ASKP…SDGG. Residues 83 to 92 are compositionally biased toward polar residues; the sequence is PSSTPSTYSS. Acidic residues predominate over residues 176 to 195; the sequence is DMLESDGDDGNEWEDMDEGG. Phosphoserine occurs at positions 243, 326, and 403. Residues 399–413 show a composition bias toward polar residues; sequence MINSSDLPKVSTQPR. Positions 399 to 437 are disordered; it reads MINSSDLPKVSTQPRLKTESKEDKKARKQAIKEERKERR. The span at 414-437 shows a compositional bias: basic and acidic residues; it reads LKTESKEDKKARKQAIKEERKERR. Positions 414-470 form a coiled coil; the sequence is LKTESKEDKKARKQAIKEERKERRVEKKANKLAFKLEKRRQEKELLNLKKNVEGLKL.

It belongs to the LTV1 family.

In terms of biological role, essential for ribosome biogenesis. The protein is Protein LTV1 homolog (Ltv1) of Rattus norvegicus (Rat).